Consider the following 369-residue polypeptide: MNQTPDQARPTPRAGIMDIDAYVPGKSAAPAGVAKVYKLSSNENPLGPSPKAIEAAREVAARLDIYPDGTARRLREAIAEVHGLTAQNIICSNGSDEILGLLAQTYLAPGDEAIFTEHAFMVYKIYIQSAGAAPIAVKETDERADIDAMLAAVTPRTKIVFLANPNNPTGTYVPFQEVRRLHAGLPRHVLLVLDAAYAEYVRRNDYEAGIELVRSAENVVMTRTFSKIGLGGARIGWMYAPMHIVDAINRVRGPFNVNATAIEAGIAAIRDRAHVERSVTHNETWLTWLSQEMTGLGLRVTPSVGNFLLIHFPDDQKHSAAAADDYLTARGYILRRVSGYGFPNALRMTVGTEEANRGVVAALTTFLKS.

At K227 the chain carries N6-(pyridoxal phosphate)lysine.

Belongs to the class-II pyridoxal-phosphate-dependent aminotransferase family. Histidinol-phosphate aminotransferase subfamily. Homodimer. Requires pyridoxal 5'-phosphate as cofactor.

It carries out the reaction L-histidinol phosphate + 2-oxoglutarate = 3-(imidazol-4-yl)-2-oxopropyl phosphate + L-glutamate. It functions in the pathway amino-acid biosynthesis; L-histidine biosynthesis; L-histidine from 5-phospho-alpha-D-ribose 1-diphosphate: step 7/9. In Mesorhizobium japonicum (strain LMG 29417 / CECT 9101 / MAFF 303099) (Mesorhizobium loti (strain MAFF 303099)), this protein is Histidinol-phosphate aminotransferase 2 (hisC2).